Consider the following 528-residue polypeptide: MSTVNVQIGLHELLNGSNAQIQLSVPQLVEKVLMRNEGKLTSTGAVSASTGKYTGRSPKDKFIVKEPSVANKIAWGPVNQPISEERFNKLYTKVLEYLKEKEELFVFKGFAGADRNYRLPIQVVNEYAWHNLFVHQLFIRPTEEELANHNAPFTIVSAPNFKADPAVDGTNSEAFIIVSFEKRIVLIGGTEYAGEMKKSIFSIMNFLLPEQDILSMHCSANVGEEGDVALFFGLSGTGKTTLSADPHRKLIGDDEHGWSDNGVFNIEGGCYAKCINLSHEKEPQIFDAIKFGSVLENVIVDDKTRIADYSDTALTENTRAAYPIDAIDNIVLPSVAGHPNTIIFLTADASGVLPPISKLSKEQAMYHFLSGYTSKLAGTERGVTSPQATFSTCFGSPFLPLDASRYAEMLGEKIEKHDAKVFLVNTGWTGGEYGVGKRMNLAYTRAMVQAALNGELDKVETVKHDIFGLDVPLHVPSVPDEVLMPEQTWADQAAYKQKAIELANQFKENFKKFDNVSKDIINLGGPTA.

Residues Arg-56, Tyr-192, and Lys-198 each coordinate substrate. ATP-binding positions include Lys-198, His-217, and 233 to 241 (GLSGTGKTT). Mn(2+)-binding residues include Lys-198 and His-217. Residue Asp-254 coordinates Mn(2+). The ATP site is built by Glu-282, Arg-319, and Thr-444. Substrate is bound at residue Arg-319.

Belongs to the phosphoenolpyruvate carboxykinase (ATP) family. Mn(2+) serves as cofactor.

The protein resides in the cytoplasm. The enzyme catalyses oxaloacetate + ATP = phosphoenolpyruvate + ADP + CO2. The protein operates within carbohydrate biosynthesis; gluconeogenesis. Involved in the gluconeogenesis. Catalyzes the conversion of oxaloacetate (OAA) to phosphoenolpyruvate (PEP) through direct phosphoryl transfer between the nucleoside triphosphate and OAA. The protein is Phosphoenolpyruvate carboxykinase (ATP) of Bacillus cytotoxicus (strain DSM 22905 / CIP 110041 / 391-98 / NVH 391-98).